The sequence spans 103 residues: Glutaredoxin-C11 (103 aa).

The Glutaredoxin domain maps to 1–102; it reads MERIRDLSSK…QMLKDAKAIW (102 aa). A disulfide bridge connects residues cysteine 21 and cysteine 24.

The protein belongs to the glutaredoxin family. CC-type subfamily.

Its subcellular location is the cytoplasm. In terms of biological role, has a glutathione-disulfide oxidoreductase activity in the presence of NADPH and glutathione reductase. Reduces low molecular weight disulfides and proteins. This chain is Glutaredoxin-C11 (GRXC11), found in Arabidopsis thaliana (Mouse-ear cress).